Here is a 463-residue protein sequence, read N- to C-terminus: Glutamyl-tRNA(Gln) amidotransferase subunit A, mitochondrial (463 aa).

Catalysis depends on charge relay system residues Lys-47 and Ser-124. The Acyl-ester intermediate role is filled by Ser-148.

The protein belongs to the amidase family. GatA subfamily. As to quaternary structure, subunit of the heterotrimeric GatFAB amidotransferase (AdT) complex, composed of A, B and F subunits.

It localises to the mitochondrion. The enzyme catalyses L-glutamyl-tRNA(Gln) + L-glutamine + ATP + H2O = L-glutaminyl-tRNA(Gln) + L-glutamate + ADP + phosphate + H(+). Allows the formation of correctly charged Gln-tRNA(Gln) through the transamidation of misacylated Glu-tRNA(Gln) in the mitochondria. The reaction takes place in the presence of glutamine and ATP through an activated gamma-phospho-Glu-tRNA(Gln). This Eremothecium gossypii (strain ATCC 10895 / CBS 109.51 / FGSC 9923 / NRRL Y-1056) (Yeast) protein is Glutamyl-tRNA(Gln) amidotransferase subunit A, mitochondrial.